A 578-amino-acid polypeptide reads, in one-letter code: Phosphatase DCR2 (578 aa).

116 to 123 is an ATP binding site; that stretch reads GRRWFGKS.

It is found in the cytoplasm. In terms of biological role, required for cell cycle progression. Has a role in the completion of START. The protein is Phosphatase DCR2 (DCR2) of Saccharomyces cerevisiae (strain ATCC 204508 / S288c) (Baker's yeast).